Here is a 551-residue protein sequence, read N- to C-terminus: Probable glucomannan 4-beta-mannosyltransferase 3 (551 aa).

The helical transmembrane segment at 60 to 80 (ACLALSAMLLADAVLMAAACF) threads the bilayer. Asp154 is an active-site residue. 2 residues coordinate substrate: Asp213 and Asp215. Residue Asp307 is part of the active site. 4 helical membrane-spanning segments follow: residues 386–406 (VVAH…SVLI), 409–429 (VTVP…LHAI), 504–524 (ILFS…GGDY), and 525–545 (YFVY…GFCG).

It belongs to the glycosyltransferase 2 family. Plant cellulose synthase-like A subfamily.

It is found in the golgi apparatus membrane. The catalysed reaction is GDP-mannose + (glucomannan)n = GDP + (glucomannan)n+1.. In terms of biological role, probable mannan synthase which consists of a 4-beta-mannosyltransferase activity on mannan using GDP-mannose. The beta-1,4-mannan product is the backbone for galactomannan synthesis by galactomannan galactosyltransferase. Galactomannan is a noncellulosic polysaccharides of plant cell wall. The chain is Probable glucomannan 4-beta-mannosyltransferase 3 from Oryza sativa subsp. japonica (Rice).